A 236-amino-acid chain; its full sequence is uncharacterized protein (236 aa).

This is an uncharacterized protein from Saccharolobus islandicus (Sulfolobus islandicus).